The sequence spans 208 residues: Large ribosomal subunit protein uL4 (208 aa).

The tract at residues 44–89 (RRQGTHKAKNRSEVRGGGRKPYRQKGTGHARQGSTRSPLMTGGGTI) is disordered. The span at 60–71 (GGRKPYRQKGTG) shows a compositional bias: basic residues.

This sequence belongs to the universal ribosomal protein uL4 family. As to quaternary structure, part of the 50S ribosomal subunit.

Functionally, one of the primary rRNA binding proteins, this protein initially binds near the 5'-end of the 23S rRNA. It is important during the early stages of 50S assembly. It makes multiple contacts with different domains of the 23S rRNA in the assembled 50S subunit and ribosome. Its function is as follows. Forms part of the polypeptide exit tunnel. The protein is Large ribosomal subunit protein uL4 of Chlorobium phaeobacteroides (strain BS1).